The sequence spans 1507 residues: Chromatin-remodeling ATPase INO80 (1507 aa).

2 disordered regions span residues Pro-30–Asp-82 and Arg-428–Gln-452. The span at Gly-38 to Ser-67 shows a compositional bias: polar residues. The 126-residue stretch at Ala-350–Ser-475 folds into the DBINO domain. Residues Arg-428 to Arg-450 show a composition bias toward basic and acidic residues. The Helicase ATP-binding domain occupies Val-598 to Met-769. ATP is bound at residue Asp-611–Thr-618. The Helicase C-terminal domain maps to Thr-1210 to Gln-1360. A disordered region spans residues Leu-1415–Asn-1507. Polar residues predominate over residues Ala-1491 to Asn-1507.

The protein belongs to the SNF2/RAD54 helicase family. In terms of assembly, component of the INO80 chromatin-remodeling complex. Associates with REF6/EIN6.

Its subcellular location is the nucleus. The enzyme catalyses ATP + H2O = ADP + phosphate + H(+). Functionally, ATPase component of the chromatin remodeling INO80 complex which is involved in transcriptional regulation, DNA replication and DNA repair. Binds DNA. As part of the INO80 complex, remodels chromatin by shifting nucleosomes. The INO80 complex controls ethylene-induced H2A.Z eviction dynamics. Positive regulator of homologous recombination, but not an essential component of homologous recombination. Not involved in the illegitimate repair pathway. The sequence is that of Chromatin-remodeling ATPase INO80 from Arabidopsis thaliana (Mouse-ear cress).